We begin with the raw amino-acid sequence, 50 residues long: Monellin chain B (50 aa).

As to quaternary structure, heterodimer of an A chain and a B chain.

Taste-modifying protein; intensely sweet-tasting protein. The chain is Monellin chain B from Dioscoreophyllum cumminsii (Serendipity berry).